A 640-amino-acid chain; its full sequence is Antigenic protein NP1 (640 aa).

In terms of domain architecture, Peptidase M60 spans 1-288; sequence VQVSIGKCNH…SYVNIAHAFG (288 aa). A PA14 domain is found at 463-615; the sequence is LDPHQVEYEV…TDQSSVNVSK (153 aa).

This Entamoeba histolytica protein is Antigenic protein NP1.